We begin with the raw amino-acid sequence, 1755 residues long: Transposon Ty1-JR2 Gag-Pol polyprotein (1755 aa).

Positions 1-16 are enriched in low complexity; the sequence is MESQQLSQHSHISHGS. Disordered stretches follow at residues 1 to 93, 126 to 173, and 352 to 421; these read MESQ…MMTQ, PQSQ…RPPP, and GSRN…SKST. Polar residues-rich tracts occupy residues 48–60, 71–93, and 127–152; these read TKAN…TPAS, SPQT…MMTQ, and QSQF…GNTF. Over residues 153–165 the composition is skewed to low complexity; that stretch reads TDSSSADSDMTST. The RNA-binding stretch occupies residues 299–401; it reads NNGIHINNKV…NSKSKTARAH (103 aa). Over residues 402 to 418 the composition is skewed to low complexity; it reads NVSTSNNSPSTDNDSIS. S416 carries the phosphoserine modification. The For protease activity; shared with dimeric partner role is filled by D461. Residues 583 to 640 are integrase-type zinc finger-like; that stretch reads NVHTSESTRKYPYPFIHRMLAHANAQTIRYSLKNNTITYFNESDVDWSSAIDYQCPDC. Positions 660 to 835 constitute an Integrase catalytic domain; that stretch reads NSYEPFQYLH…AGLDISTLLP (176 aa). D671 and D736 together coordinate Mg(2+). 3 disordered regions span residues 956–1087, 1092–1111, and 1130–1186; these read SKAV…ETEK, RSPS…NIVP, and DLPL…EDNE. Residues 960-969 are compositionally biased toward low complexity; the sequence is SPTDSTPPST. Residues 1005–1015 show a composition bias toward polar residues; that stretch reads STPQISNIEST. Residues 1038–1053 show a composition bias toward basic and acidic residues; that stretch reads ESSHASKSKDFRHSDS. Polar residues-rich tracts occupy residues 1054–1082 and 1101–1111; these read YSEN…QISD and PENNSSHNIVP. A Bipartite nuclear localization signal motif is present at residues 1178–1212; that stretch reads KKRSLEDNETEIKVSRDTWNTKNMRSLEPPRSKKR. A Reverse transcriptase Ty1/copia-type domain is found at 1338–1476; the sequence is NNYYITQLDI…DILGLEIKYQ (139 aa). Mg(2+) contacts are provided by D1346, D1427, D1428, D1610, E1652, and D1685. Residues 1610–1752 form the RNase H Ty1/copia-type domain; that stretch reads DASYGNQPYY…IKTFKLLTNK (143 aa).

The capsid protein forms a homotrimer, from which the VLPs are assembled. The protease is a homodimer, whose active site consists of two apposed aspartic acid residues. Initially, virus-like particles (VLPs) are composed of the structural unprocessed proteins Gag and Gag-Pol, and also contain the host initiator methionine tRNA (tRNA(i)-Met) which serves as a primer for minus-strand DNA synthesis, and a dimer of genomic Ty RNA. Processing of the polyproteins occurs within the particle and proceeds by an ordered pathway, called maturation. First, the protease (PR) is released by autocatalytic cleavage of the Gag-Pol polyprotein yielding capsid protein p45 and a Pol-p154 precursor protein. This cleavage is a prerequisite for subsequent processing of Pol-p154 at the remaining sites to release the mature structural and catalytic proteins. Maturation takes place prior to the RT reaction and is required to produce transposition-competent VLPs.

It is found in the cytoplasm. It localises to the nucleus. The enzyme catalyses DNA(n) + a 2'-deoxyribonucleoside 5'-triphosphate = DNA(n+1) + diphosphate. The catalysed reaction is Endonucleolytic cleavage to 5'-phosphomonoester.. Its function is as follows. Capsid protein (CA) is the structural component of the virus-like particle (VLP), forming the shell that encapsulates the retrotransposons dimeric RNA genome. The particles are assembled from trimer-clustered units and there are holes in the capsid shells that allow for the diffusion of macromolecules. CA also has nucleocapsid-like chaperone activity, promoting primer tRNA(i)-Met annealing to the multipartite primer-binding site (PBS), dimerization of Ty1 RNA and initiation of reverse transcription. Functionally, the aspartyl protease (PR) mediates the proteolytic cleavages of the Gag and Gag-Pol polyproteins after assembly of the VLP. In terms of biological role, reverse transcriptase/ribonuclease H (RT) is a multifunctional enzyme that catalyzes the conversion of the retro-elements RNA genome into dsDNA within the VLP. The enzyme displays a DNA polymerase activity that can copy either DNA or RNA templates, and a ribonuclease H (RNase H) activity that cleaves the RNA strand of RNA-DNA heteroduplexes during plus-strand synthesis and hydrolyzes RNA primers. The conversion leads to a linear dsDNA copy of the retrotransposon that includes long terminal repeats (LTRs) at both ends. Integrase (IN) targets the VLP to the nucleus, where a subparticle preintegration complex (PIC) containing at least integrase and the newly synthesized dsDNA copy of the retrotransposon must transit the nuclear membrane. Once in the nucleus, integrase performs the integration of the dsDNA into the host genome. This chain is Transposon Ty1-JR2 Gag-Pol polyprotein (TY1B-JR2), found in Saccharomyces cerevisiae (strain ATCC 204508 / S288c) (Baker's yeast).